A 201-amino-acid polypeptide reads, in one-letter code: MAKRVTGPEIEKLIQLLAKVPGLGPRSARRAALHLIKKKDQLLGPLSNAMGEAYDKVKICSRCGNVDTVDPCTVCTDTQRDQSVIIVVEDVSDLWALERAGAMNAAYHVLGGTLSPLDGIGPDDLNIRGLIDRVGEGGIRELIIAVNATVEGQTTAHYITDQLQGLDVKITRLAHGVPVGGELDYLDEGTLAAALRARTVI.

The C4-type zinc-finger motif lies at 60–75 (CSRCGNVDTVDPCTVC). Residues 83-178 (SVIIVVEDVS…KITRLAHGVP (96 aa)) form the Toprim domain.

It belongs to the RecR family.

Functionally, may play a role in DNA repair. It seems to be involved in an RecBC-independent recombinational process of DNA repair. It may act with RecF and RecO. This chain is Recombination protein RecR, found in Rhizobium etli (strain ATCC 51251 / DSM 11541 / JCM 21823 / NBRC 15573 / CFN 42).